Reading from the N-terminus, the 223-residue chain is Retbindin (223 aa).

An N-terminal signal peptide occupies residues 1–30 (MANRGHTQPRALAWALGLTLVWILLGACGG). 4 disulfide bridges follow: cysteine 73/cysteine 143, cysteine 80/cysteine 120, cysteine 113/cysteine 157, and cysteine 126/cysteine 139.

Belongs to the folate receptor family. In terms of processing, not N-glycosylated.

It is found in the secreted. Its subcellular location is the extracellular space. It localises to the extracellular matrix. The protein resides in the interphotoreceptor matrix. The protein localises to the cell membrane. In terms of biological role, riboflavin-binding protein which might have a role in retinal flavin transport. The chain is Retbindin (RTBDN) from Canis lupus familiaris (Dog).